A 561-amino-acid chain; its full sequence is Type II methyltransferase M.BstVI (561 aa).

Belongs to the N(4)/N(6)-methyltransferase family.

The catalysed reaction is a 2'-deoxyadenosine in DNA + S-adenosyl-L-methionine = an N(6)-methyl-2'-deoxyadenosine in DNA + S-adenosyl-L-homocysteine + H(+). A gamma subtype methylase, recognizes the double-stranded sequence 5'-CTCGAG-3', methylates A-5 on both strands, and protects the DNA from cleavage by the BstVI endonuclease. The polypeptide is Type II methyltransferase M.BstVI (Geobacillus stearothermophilus (Bacillus stearothermophilus)).